Reading from the N-terminus, the 442-residue chain is Histidine--tRNA ligase (442 aa).

It belongs to the class-II aminoacyl-tRNA synthetase family. Homodimer.

It is found in the cytoplasm. It catalyses the reaction tRNA(His) + L-histidine + ATP = L-histidyl-tRNA(His) + AMP + diphosphate + H(+). This Rhodopirellula baltica (strain DSM 10527 / NCIMB 13988 / SH1) protein is Histidine--tRNA ligase.